A 242-amino-acid chain; its full sequence is Ubiquinone biosynthesis O-methyltransferase (242 aa).

S-adenosyl-L-methionine contacts are provided by arginine 36, glycine 56, aspartate 77, and methionine 130.

This sequence belongs to the methyltransferase superfamily. UbiG/COQ3 family.

The enzyme catalyses a 3-demethylubiquinol + S-adenosyl-L-methionine = a ubiquinol + S-adenosyl-L-homocysteine + H(+). The catalysed reaction is a 3-(all-trans-polyprenyl)benzene-1,2-diol + S-adenosyl-L-methionine = a 2-methoxy-6-(all-trans-polyprenyl)phenol + S-adenosyl-L-homocysteine + H(+). It functions in the pathway cofactor biosynthesis; ubiquinone biosynthesis. O-methyltransferase that catalyzes the 2 O-methylation steps in the ubiquinone biosynthetic pathway. In Pasteurella multocida (strain Pm70), this protein is Ubiquinone biosynthesis O-methyltransferase.